The primary structure comprises 726 residues: MSFCLTELHLWSLKSTLHIADRDIGVYQYYDKKDLPVSAAEHGNLEEKQRLAESRDYPWTLKNRRPEKLRDSLKELEELMQNSQCVLCQWKSKHICQLLFGSGVLVSLSLSGPQLEKVVIDRSLVGKLISDTISDALLTDSFIILSFLAQNKLCFIQFAKKMDSLDVNKRLEKLSALDYKISYHDIPGPATRTVDRHLAINSTQDLAVCWWPLLSDDAWPWTPIASEKDRANMLLLGFTQGGLEVLSSVRTEWNPLDVHFGTRQPYQVFTVECSFSVDQEPMADSCIYESVRNKLHCVSVTRIPLRSKAISCCKNSTEDKLIVGCEDSSVILYEAHRGVTLLAQAELMPSLISCHPSGAILLVGSNQGELQVFDIALSPINIQLLAEDCLPKETLQFNKFFDFSSSLVHMQWIAPPIVFQKPKRGEICDLLFLRFNRGPLGVLLFKLGVLRRGQLGLVDLIFQYIHCDEVYEAVSVLSSMNWDTLGQQCFISMSTIVNHLLRQRLTPEREAQLEASLGTFYAPARPLLDTTVLAYRDPVGTYARRLFHHLLRYQRFEKAFLLAVDIGARDLFMDIHYLALDMGELALAEVARRRADDIDVESVCSGVELLGPLDRRDMLNEGFAGSALTPEGGNPFPDLLPSSGSTPKHTIQQKIPNGPSNRRAIERKNEVMEETEEEEEEEEEAAACTDSSVATTWDAEGELREDHRRQDTEDVGSLRMVHFGLV.

WD repeat units follow at residues 305–343 (LRSK…TLLA) and 344–383 (QAEL…INIQ). The segment covering 642–660 (SSGSTPKHTIQQKIPNGPS) has biased composition (polar residues). Positions 642-717 (SSGSTPKHTI…RRQDTEDVGS (76 aa)) are disordered. Over residues 672–685 (MEETEEEEEEEEEA) the composition is skewed to acidic residues. The segment covering 701-712 (GELREDHRRQDT) has biased composition (basic and acidic residues).

This sequence belongs to the WD repeat fritz family. In terms of assembly, component of the CPLANE (ciliogenesis and planar polarity effectors) complex, composed of INTU, FUZ and WDPCP. Interacts with CPLANE1.

The protein resides in the cell membrane. It is found in the cytoplasm. Its subcellular location is the cytoskeleton. It localises to the cilium axoneme. The protein localises to the cilium basal body. Functionally, probable effector of the planar cell polarity signaling pathway which regulates the septin cytoskeleton in both ciliogenesis and collective cell movements. Together with FUZ and WDPCP proposed to function as core component of the CPLANE (ciliogenesis and planar polarity effectors) complex involved in the recruitment of peripheral IFT-A proteins to basal bodies. Binds phosphatidylinositol 3-phosphate with highest affinity, followed by phosphatidylinositol 4-phosphate and phosphatidylinositol 5-phosphate. The polypeptide is WD repeat-containing and planar cell polarity effector protein fritz homolog (Wdpcp) (Rattus norvegicus (Rat)).